The primary structure comprises 428 residues: GTPase Obg (428 aa).

In terms of domain architecture, Obg spans 1–158; it reads MFIDEVIITV…IKVKLELKLL (158 aa). In terms of domain architecture, OBG-type G spans 159–330; that stretch reads ADVALVGYPS…ILYKTYDMLS (172 aa). Residues 165-172, 190-194, 212-215, 282-285, and 311-313 each bind GTP; these read GYPSVGKS, FTTLE, DIPG, NKMD, and SVL. Serine 172 and threonine 192 together coordinate Mg(2+). The OCT domain occupies 349-428; that stretch reads ELKIEKEDFE…IADVEFEYFE (80 aa).

This sequence belongs to the TRAFAC class OBG-HflX-like GTPase superfamily. OBG GTPase family. In terms of assembly, monomer. It depends on Mg(2+) as a cofactor.

The protein resides in the cytoplasm. Its function is as follows. An essential GTPase which binds GTP, GDP and possibly (p)ppGpp with moderate affinity, with high nucleotide exchange rates and a fairly low GTP hydrolysis rate. Plays a role in control of the cell cycle, stress response, ribosome biogenesis and in those bacteria that undergo differentiation, in morphogenesis control. The protein is GTPase Obg of Fusobacterium nucleatum subsp. nucleatum (strain ATCC 25586 / DSM 15643 / BCRC 10681 / CIP 101130 / JCM 8532 / KCTC 2640 / LMG 13131 / VPI 4355).